A 91-amino-acid polypeptide reads, in one-letter code: ATP synthase subunit c (91 aa).

The next 2 membrane-spanning stretches (helical) occupy residues 4–24 (FTMC…GTGI) and 53–73 (IGLA…LIIL).

This sequence belongs to the ATPase C chain family. As to quaternary structure, F-type ATPases have 2 components, F(1) - the catalytic core - and F(0) - the membrane proton channel. F(1) has five subunits: alpha(3), beta(3), gamma(1), delta(1), epsilon(1). F(0) has three main subunits: a(1), b(2) and c(10-14). The alpha and beta chains form an alternating ring which encloses part of the gamma chain. F(1) is attached to F(0) by a central stalk formed by the gamma and epsilon chains, while a peripheral stalk is formed by the delta and b chains.

The protein resides in the cell inner membrane. F(1)F(0) ATP synthase produces ATP from ADP in the presence of a proton or sodium gradient. F-type ATPases consist of two structural domains, F(1) containing the extramembraneous catalytic core and F(0) containing the membrane proton channel, linked together by a central stalk and a peripheral stalk. During catalysis, ATP synthesis in the catalytic domain of F(1) is coupled via a rotary mechanism of the central stalk subunits to proton translocation. Functionally, key component of the F(0) channel; it plays a direct role in translocation across the membrane. A homomeric c-ring of between 10-14 subunits forms the central stalk rotor element with the F(1) delta and epsilon subunits. The chain is ATP synthase subunit c from Citrifermentans bemidjiense (strain ATCC BAA-1014 / DSM 16622 / JCM 12645 / Bem) (Geobacter bemidjiensis).